The sequence spans 373 residues: 4-hydroxy-3-methylbut-2-en-1-yl diphosphate synthase (flavodoxin) (373 aa).

4 residues coordinate [4Fe-4S] cluster: Cys-270, Cys-273, Cys-305, and Glu-312.

Belongs to the IspG family. The cofactor is [4Fe-4S] cluster.

The enzyme catalyses (2E)-4-hydroxy-3-methylbut-2-enyl diphosphate + oxidized [flavodoxin] + H2O + 2 H(+) = 2-C-methyl-D-erythritol 2,4-cyclic diphosphate + reduced [flavodoxin]. It participates in isoprenoid biosynthesis; isopentenyl diphosphate biosynthesis via DXP pathway; isopentenyl diphosphate from 1-deoxy-D-xylulose 5-phosphate: step 5/6. Its function is as follows. Converts 2C-methyl-D-erythritol 2,4-cyclodiphosphate (ME-2,4cPP) into 1-hydroxy-2-methyl-2-(E)-butenyl 4-diphosphate. The protein is 4-hydroxy-3-methylbut-2-en-1-yl diphosphate synthase (flavodoxin) of Proteus mirabilis (strain HI4320).